Here is a 747-residue protein sequence, read N- to C-terminus: Probable alpha-galactosidase C (747 aa).

A signal peptide spans 1 to 24; the sequence is MVAFMNSATFVAGLFTLWSRPIWA. N-linked (GlcNAc...) asparagine glycosylation is found at Asn-36, Asn-182, Asn-190, Asn-362, Asn-429, and Asn-449. The active-site Nucleophile is the Asp-507. The N-linked (GlcNAc...) asparagine glycan is linked to Asn-534. Asp-569 functions as the Proton donor in the catalytic mechanism.

Belongs to the glycosyl hydrolase 36 family. Homotetramer. Requires Mg(2+) as cofactor. The cofactor is NAD(+).

It is found in the secreted. The enzyme catalyses Hydrolysis of terminal, non-reducing alpha-D-galactose residues in alpha-D-galactosides, including galactose oligosaccharides, galactomannans and galactolipids.. In terms of biological role, hydrolyzes a variety of simple alpha-D-galactoside as well as more complex molecules such as oligosaccharides and polysaccharides. This chain is Probable alpha-galactosidase C (aglC), found in Aspergillus terreus (strain NIH 2624 / FGSC A1156).